Here is a 271-residue protein sequence, read N- to C-terminus: Thymidine kinase (271 aa).

ATP is bound by residues 74–81 and 152–155; these read GPMFAGKT and DEAQ. Residue Glu-153 is the Proton acceptor of the active site. Tyr-184 contributes to the substrate binding site. Positions 209 and 212 each coordinate Zn(2+). Tyr-237 serves as a coordination point for substrate. Zn(2+) is bound at residue Cys-241.

It belongs to the thymidine kinase family.

The enzyme catalyses thymidine + ATP = dTMP + ADP + H(+). The sequence is that of Thymidine kinase (TK) from Oryza sativa subsp. japonica (Rice).